Reading from the N-terminus, the 300-residue chain is Auxin-responsive protein IAA7 (300 aa).

Disordered stretches follow at residues 1 to 80 (MGEA…DGDK) and 92 to 125 (VSHS…LASN). The short motif at 43–47 (LSLGL) is the EAR-like (transcriptional repression) element. Positions 92–103 (VSHSQGKANKNK) are enriched in polar residues. Residues 177 to 281 (APFIKINMDG…SVKRLRVLKT (105 aa)) form the PB1 domain.

The protein belongs to the Aux/IAA family. In terms of assembly, homodimers and heterodimers. In terms of tissue distribution, expressed at low levels in roots and shoots.

The protein resides in the nucleus. Its function is as follows. Aux/IAA proteins are short-lived transcriptional factors that function as repressors of early auxin response genes at low auxin concentrations. The polypeptide is Auxin-responsive protein IAA7 (IAA7) (Oryza sativa subsp. japonica (Rice)).